The chain runs to 467 residues: Xanthan biosynthesis protein XanB (467 aa).

Belongs to the mannose-6-phosphate isomerase type 2 family.

It carries out the reaction D-mannose 6-phosphate = D-fructose 6-phosphate. It catalyses the reaction alpha-D-mannose 1-phosphate + GTP + H(+) = GDP-alpha-D-mannose + diphosphate. It functions in the pathway nucleotide-sugar biosynthesis; GDP-alpha-D-mannose biosynthesis; GDP-alpha-D-mannose from alpha-D-mannose 1-phosphate (GTP route): step 1/1. The protein operates within nucleotide-sugar biosynthesis; GDP-alpha-D-mannose biosynthesis; alpha-D-mannose 1-phosphate from D-fructose 6-phosphate: step 1/2. Functionally, involved in xanthan production. This chain is Xanthan biosynthesis protein XanB (xanB), found in Xanthomonas campestris pv. campestris (strain B100).